The sequence spans 359 residues: Medium-wave-sensitive opsin 1 (359 aa).

Over 1 to 47 (MAQQLTGEQTLDHYEDSTQASIFTYTNSNSTRGPFEGPNYHIAPRWV) the chain is Extracellular. The tract at residues 12 to 38 (DHYEDSTQASIFTYTNSNSTRGPFEGP) is required for 11-cis-retinal regeneration. The N-linked (GlcNAc...) asparagine glycan is linked to asparagine 29. A helical transmembrane segment spans residues 48-72 (YHLTSTWMILVVIASVFTNGLVLAA). Residues 73-84 (TMRFKKLRHPLN) lie on the Cytoplasmic side of the membrane. A helical membrane pass occupies residues 85–110 (WILVNLAVADLAETIIASTISVVNQI). Residues 111-124 (YGYFVLGHPLCVIE) are Extracellular-facing. Cysteine 121 and cysteine 198 are joined by a disulfide. The chain crosses the membrane as a helical span at residues 125-144 (GYIVSLCGITGLWSLAIISW). At 145–163 (ERWLVVCKPFGNVRFDAKL) the chain is on the cytoplasmic side. A helical membrane pass occupies residues 164–187 (ATVGIVFSWVWAAVWTAPPIFGWS). The Extracellular portion of the chain corresponds to 188-213 (RYWPYGLKTSCGPDVFSGTSYPGVQS). A helical membrane pass occupies residues 214-241 (YMMVLMVTCCIFPLSIIVLCYLQVWLAI). Residues 242–263 (RAVAKQQKESESTQKAEKEVTR) lie on the Cytoplasmic side of the membrane. A helical transmembrane segment spans residues 264-287 (MVVVMVFAYCLCWGPYTFFACFAT). The Extracellular segment spans residues 288–295 (AHPGYAFH). A helical membrane pass occupies residues 296–320 (PLVASLPSYFAKSATIYNPIIYVFM). The residue at position 307 (lysine 307) is an N6-(retinylidene)lysine. At 321 to 359 (NRQFRNCILQLFGKKVDDSSELSSTSKTEVSSVSSVSPA) the chain is on the cytoplasmic side.

This sequence belongs to the G-protein coupled receptor 1 family. Opsin subfamily. Monomer. Homodimer. Homotetramer. O-glycosylated. In terms of processing, phosphorylated on some or all of the serine and threonine residues present in the C-terminal region. In terms of tissue distribution, expressed in cone photoreceptor cells.

Its subcellular location is the membrane. Its function is as follows. Visual pigments are the light-absorbing molecules that mediate vision. They consist of an apoprotein, opsin, covalently linked to cis-retinal. May increase spectral sensitivity in dim light. In Rattus norvegicus (Rat), this protein is Medium-wave-sensitive opsin 1 (Opn1mw).